A 76-amino-acid chain; its full sequence is Putative membrane protein insertion efficiency factor (76 aa).

Belongs to the UPF0161 family.

It is found in the cell inner membrane. Its function is as follows. Could be involved in insertion of integral membrane proteins into the membrane. The chain is Putative membrane protein insertion efficiency factor from Paraburkholderia phymatum (strain DSM 17167 / CIP 108236 / LMG 21445 / STM815) (Burkholderia phymatum).